The sequence spans 63 residues: Large ribosomal subunit protein uL30 (63 aa).

Belongs to the universal ribosomal protein uL30 family. Part of the 50S ribosomal subunit.

The polypeptide is Large ribosomal subunit protein uL30 (Rickettsia peacockii (strain Rustic)).